A 192-amino-acid polypeptide reads, in one-letter code: Peptidyl-tRNA hydrolase (192 aa).

His17 serves as a coordination point for tRNA. His22 (proton acceptor) is an active-site residue. 3 residues coordinate tRNA: Phe68, Asn70, and Asn116.

It belongs to the PTH family. As to quaternary structure, monomer.

Its subcellular location is the cytoplasm. It carries out the reaction an N-acyl-L-alpha-aminoacyl-tRNA + H2O = an N-acyl-L-amino acid + a tRNA + H(+). Functionally, hydrolyzes ribosome-free peptidyl-tRNAs (with 1 or more amino acids incorporated), which drop off the ribosome during protein synthesis, or as a result of ribosome stalling. Catalyzes the release of premature peptidyl moieties from peptidyl-tRNA molecules trapped in stalled 50S ribosomal subunits, and thus maintains levels of free tRNAs and 50S ribosomes. The chain is Peptidyl-tRNA hydrolase from Xylella fastidiosa (strain 9a5c).